The sequence spans 189 residues: GTP cyclohydrolase 1 (189 aa).

Zn(2+) is bound by residues C79, H82, and C150.

The protein belongs to the GTP cyclohydrolase I family. As to quaternary structure, toroid-shaped homodecamer, composed of two pentamers of five dimers.

It carries out the reaction GTP + H2O = 7,8-dihydroneopterin 3'-triphosphate + formate + H(+). It participates in cofactor biosynthesis; 7,8-dihydroneopterin triphosphate biosynthesis; 7,8-dihydroneopterin triphosphate from GTP: step 1/1. This chain is GTP cyclohydrolase 1, found in Rickettsia massiliae (strain Mtu5).